The chain runs to 109 residues: Cell division protein ZapA (109 aa).

Positions 21-99 (PEQLDALNQA…IEQALLEQGR (79 aa)) form a coiled coil.

This sequence belongs to the ZapA family. Type 1 subfamily. As to quaternary structure, homodimer. Interacts with FtsZ.

It is found in the cytoplasm. Functionally, activator of cell division through the inhibition of FtsZ GTPase activity, therefore promoting FtsZ assembly into bundles of protofilaments necessary for the formation of the division Z ring. It is recruited early at mid-cell but it is not essential for cell division. The sequence is that of Cell division protein ZapA from Edwardsiella ictaluri (strain 93-146).